The chain runs to 68 residues: Alpha-conotoxin-like Ca1.2 (68 aa).

Residues 1–21 (MGMRMMFTVFLLVVLATTVVS) form the signal peptide. A propeptide spanning residues 22–48 (FTSDRASEGRNAAAKDKASDLVALTVR) is cleaved from the precursor. 2 cysteine pairs are disulfide-bonded: Cys-50/Cys-56 and Cys-51/Cys-64. Positions 52-54 (AIR) are lacks the Ser-Xaa-Pro motif that is crucial for potent interaction with nAChR. Position 63 is a sulfotyrosine (Tyr-63). Cys-64 is subject to Cysteine amide. The propeptide occupies 65-68 (GGIY).

The protein belongs to the conotoxin A superfamily. In terms of tissue distribution, expressed by the venom duct.

Its subcellular location is the secreted. Its function is as follows. Alpha-conotoxins act on postsynaptic membranes, they bind to the nicotinic acetylcholine receptors (nAChR) and thus inhibit them. Has possibly a distinct nAChR binding mode from other alpha-conotoxins, due to a different three residue motif (lacks the Ser-Xaa-Pro motif). The protein is Alpha-conotoxin-like Ca1.2 of Conus caracteristicus (Characteristic cone).